Here is a 193-residue protein sequence, read N- to C-terminus: dCTP deaminase (193 aa).

Residues 110–115, Asp128, 136–138, Tyr171, Lys178, and Gln182 contribute to the dCTP site; these read RSSLAR and VLE. The active-site Proton donor/acceptor is the Glu138.

The protein belongs to the dCTP deaminase family. In terms of assembly, homotrimer.

The enzyme catalyses dCTP + H2O + H(+) = dUTP + NH4(+). It functions in the pathway pyrimidine metabolism; dUMP biosynthesis; dUMP from dCTP (dUTP route): step 1/2. Functionally, catalyzes the deamination of dCTP to dUTP. The sequence is that of dCTP deaminase from Buchnera aphidicola subsp. Baizongia pistaciae (strain Bp).